The chain runs to 301 residues: NADH-ubiquinone oxidoreductase chain 1 (301 aa).

The next 8 helical transmembrane spans lie at 4–24, 62–82, 96–116, 140–160, 165–185, 216–236, 247–267, and 279–299; these read IIPI…VLGY, LALF…MWIP, ILFM…SGWA, LAII…STLI, YTWL…STIA, LFFL…IILF, EMYT…FLWI, and LMHL…MWHV.

Belongs to the complex I subunit 1 family.

It localises to the mitochondrion inner membrane. The enzyme catalyses a ubiquinone + NADH + 5 H(+)(in) = a ubiquinol + NAD(+) + 4 H(+)(out). Core subunit of the mitochondrial membrane respiratory chain NADH dehydrogenase (Complex I) that is believed to belong to the minimal assembly required for catalysis. Complex I functions in the transfer of electrons from NADH to the respiratory chain. The immediate electron acceptor for the enzyme is believed to be ubiquinone. This Nyctalus noctula (Noctule bat) protein is NADH-ubiquinone oxidoreductase chain 1 (MT-ND1).